A 948-amino-acid chain; its full sequence is Protocadherin alpha-10 (948 aa).

The first 28 residues, 1 to 28 (MVSRCSCLGVQCLLLSLLLLAAWEVGSG), serve as a signal peptide directing secretion. Cadherin domains are found at residues 29–132 (QLHY…PPRF), 133–241 (SVTE…APIF), 242–349 (DRPV…SPEV), 350–454 (IVTS…APAF), 455–564 (AQPE…APAL), and 587–689 (GHVV…APEV). The Extracellular segment spans residues 29 to 695 (QLHYSVYEEA…APEVALVDVN (667 aa)). Asn-256 and Asn-264 each carry an N-linked (GlcNAc...) asparagine glycan. A glycan (N-linked (GlcNAc...) asparagine) is linked at Asn-547. The helical transmembrane segment at 696–716 (VYLIIAICAVSSLLVLTLLLY) threads the bilayer. The Cytoplasmic segment spans residues 717–948 (TALRCSAAPT…GNSTTDNSDQ (232 aa)). PXXP repeat units follow at residues 732–735 (PVKP), 772–775 (PSLP), 797–800 (PRQP), 830–833 (PGGP), 871–874 (PGNP), and 889–892 (PGSP). A 6 X 4 AA repeats of P-X-X-P region spans residues 732-892 (PVKPTLVCSS…PDKFIIPGSP (161 aa)). 2 disordered regions span residues 783 to 804 (DGEDQSIGGDHSRKPRQPNPDW) and 827 to 948 (RAGP…NSDQ). Basic and acidic residues predominate over residues 907 to 921 (DKSDFITFGKKEETK).

Its subcellular location is the cell membrane. Its function is as follows. Potential calcium-dependent cell-adhesion protein. May be involved in the establishment and maintenance of specific neuronal connections in the brain. The chain is Protocadherin alpha-10 (PCDHA10) from Pan troglodytes (Chimpanzee).